Consider the following 166-residue polypeptide: Thiol peroxidase (166 aa).

The region spanning 18-166 is the Thioredoxin domain; the sequence is LKVGDKAPDV…NYEALLKVLK (149 aa). Cys-60 functions as the Cysteine sulfenic acid (-SOH) intermediate in the catalytic mechanism. A disulfide bridge connects residues Cys-60 and Cys-94.

It belongs to the peroxiredoxin family. Tpx subfamily. In terms of assembly, homodimer.

It catalyses the reaction a hydroperoxide + [thioredoxin]-dithiol = an alcohol + [thioredoxin]-disulfide + H2O. Functionally, thiol-specific peroxidase that catalyzes the reduction of hydrogen peroxide and organic hydroperoxides to water and alcohols, respectively. Plays a role in cell protection against oxidative stress by detoxifying peroxides. The sequence is that of Thiol peroxidase from Helicobacter pylori (strain ATCC 700392 / 26695) (Campylobacter pylori).